Consider the following 148-residue polypeptide: SsrA-binding protein (148 aa).

This sequence belongs to the SmpB family.

The protein resides in the cytoplasm. Its function is as follows. Required for rescue of stalled ribosomes mediated by trans-translation. Binds to transfer-messenger RNA (tmRNA), required for stable association of tmRNA with ribosomes. tmRNA and SmpB together mimic tRNA shape, replacing the anticodon stem-loop with SmpB. tmRNA is encoded by the ssrA gene; the 2 termini fold to resemble tRNA(Ala) and it encodes a 'tag peptide', a short internal open reading frame. During trans-translation Ala-aminoacylated tmRNA acts like a tRNA, entering the A-site of stalled ribosomes, displacing the stalled mRNA. The ribosome then switches to translate the ORF on the tmRNA; the nascent peptide is terminated with the 'tag peptide' encoded by the tmRNA and targeted for degradation. The ribosome is freed to recommence translation, which seems to be the essential function of trans-translation. The sequence is that of SsrA-binding protein from Ehrlichia ruminantium (strain Gardel).